A 34-amino-acid polypeptide reads, in one-letter code: Photosystem II reaction center protein M (34 aa).

The chain crosses the membrane as a helical span at residues 5–25; sequence ILAFIATALFILIPTAFLLIL.

The protein belongs to the PsbM family. PSII is composed of 1 copy each of membrane proteins PsbA, PsbB, PsbC, PsbD, PsbE, PsbF, PsbH, PsbI, PsbJ, PsbK, PsbL, PsbM, PsbT, PsbX, PsbY, PsbZ, Psb30/Ycf12, at least 3 peripheral proteins of the oxygen-evolving complex and a large number of cofactors. It forms dimeric complexes.

The protein resides in the plastid. The protein localises to the chloroplast thylakoid membrane. Functionally, one of the components of the core complex of photosystem II (PSII). PSII is a light-driven water:plastoquinone oxidoreductase that uses light energy to abstract electrons from H(2)O, generating O(2) and a proton gradient subsequently used for ATP formation. It consists of a core antenna complex that captures photons, and an electron transfer chain that converts photonic excitation into a charge separation. This subunit is found at the monomer-monomer interface. The sequence is that of Photosystem II reaction center protein M from Anthoceros angustus (Hornwort).